A 216-amino-acid polypeptide reads, in one-letter code: Protein Syd (216 aa).

Belongs to the Syd family.

Its subcellular location is the cell inner membrane. Interacts with the SecY protein in vivo. May bind preferentially to an uncomplexed state of SecY, thus functioning either as a chelating agent for excess SecY in the cell or as a regulatory factor that negatively controls the translocase function. In Shewanella putrefaciens (strain CN-32 / ATCC BAA-453), this protein is Protein Syd.